Consider the following 1001-residue polypeptide: O-GlcNAcase NagJ (1001 aa).

An N-terminal signal peptide occupies residues 1 to 30 (MKRKMLKRLLTSAFACMFIANGLITTTVRA). A catalytic domain region spans residues 179-469 (VSARGIVEGF…WNRAIDMLYG (291 aa)). The GH84 domain occupies 180-452 (SARGIVEGFY…TAADYSWNMD (273 aa)). 3 residues coordinate a protein: Gly-187, Lys-218, and Asp-297. Catalysis depends on Asp-298, which acts as the Proton donor. A protein is bound by residues Tyr-335, 394 to 396 (WWN), Asp-401, and Asn-429. Coiled coils occupy residues 515–543 (KEDASALIEELYGEFARMEEACNNLKANL) and 573–597 (VAQLNEDTEAYESAKEIAQNKLNTA). A Fibronectin type-III domain is found at 916-1001 (PVRDFKASEI…KESLTLRTAR (86 aa)).

It belongs to the glycosyl hydrolase 84 family.

The enzyme catalyses 3-O-(N-acetyl-beta-D-glucosaminyl)-L-seryl-[protein] + H2O = N-acetyl-D-glucosamine + L-seryl-[protein]. It catalyses the reaction 3-O-(N-acetyl-beta-D-glucosaminyl)-L-threonyl-[protein] + H2O = L-threonyl-[protein] + N-acetyl-D-glucosamine. Inhibited by O-(2-acetamido-2-deoxy-D-glucopyranosylidene)amino-N-phenyl-carbamate (PUGNAc) and streptozotocin. Its function is as follows. Binds carbohydrates. Capable of hydrolyzing the glycosidic link of O-GlcNAcylated proteins. Can bind and deglycosylate O-glycosylated peptides from mammals. The protein is O-GlcNAcase NagJ (nagJ) of Clostridium perfringens (strain ATCC 13124 / DSM 756 / JCM 1290 / NCIMB 6125 / NCTC 8237 / Type A).